The following is a 511-amino-acid chain: Bifunctional purine biosynthesis protein PurH (511 aa).

The MGS-like domain occupies 1–146; that stretch reads MTKRALVSVS…KNHADVTVVV (146 aa).

This sequence belongs to the PurH family.

It carries out the reaction (6R)-10-formyltetrahydrofolate + 5-amino-1-(5-phospho-beta-D-ribosyl)imidazole-4-carboxamide = 5-formamido-1-(5-phospho-D-ribosyl)imidazole-4-carboxamide + (6S)-5,6,7,8-tetrahydrofolate. It catalyses the reaction IMP + H2O = 5-formamido-1-(5-phospho-D-ribosyl)imidazole-4-carboxamide. The protein operates within purine metabolism; IMP biosynthesis via de novo pathway; 5-formamido-1-(5-phospho-D-ribosyl)imidazole-4-carboxamide from 5-amino-1-(5-phospho-D-ribosyl)imidazole-4-carboxamide (10-formyl THF route): step 1/1. It participates in purine metabolism; IMP biosynthesis via de novo pathway; IMP from 5-formamido-1-(5-phospho-D-ribosyl)imidazole-4-carboxamide: step 1/1. This is Bifunctional purine biosynthesis protein PurH from Shouchella clausii (strain KSM-K16) (Alkalihalobacillus clausii).